Consider the following 362-residue polypeptide: 3-isopropylmalate dehydrogenase (362 aa).

NAD(+) is bound at residue 75–88; sequence GPKWANLPPTEQPE. Substrate-binding residues include R96, R106, R135, and D224. Mg(2+) contacts are provided by D224, D248, and D252. Position 282-294 (282-294) interacts with NAD(+); that stretch reads GSAPDIAGLGVAN.

This sequence belongs to the isocitrate and isopropylmalate dehydrogenases family. LeuB type 1 subfamily. Homodimer. Mg(2+) serves as cofactor. It depends on Mn(2+) as a cofactor.

The protein localises to the cytoplasm. It catalyses the reaction (2R,3S)-3-isopropylmalate + NAD(+) = 4-methyl-2-oxopentanoate + CO2 + NADH. Its pathway is amino-acid biosynthesis; L-leucine biosynthesis; L-leucine from 3-methyl-2-oxobutanoate: step 3/4. Its function is as follows. Catalyzes the oxidation of 3-carboxy-2-hydroxy-4-methylpentanoate (3-isopropylmalate) to 3-carboxy-4-methyl-2-oxopentanoate. The product decarboxylates to 4-methyl-2 oxopentanoate. The protein is 3-isopropylmalate dehydrogenase of Colwellia psychrerythraea (strain 34H / ATCC BAA-681) (Vibrio psychroerythus).